Here is a 243-residue protein sequence, read N- to C-terminus: Voltage-gated monoatomic cation channel TMEM109 (243 aa).

Positions 1-33 are cleaved as a signal peptide; that stretch reads MAGAHSTPLWSRHLLKAVLMVLVALFLVHSASA. Over 34–83 the chain is Lumenal; the sequence is QSHREFASPGQQKKETSADILTQIGRSLKEMLDTWLGPETMHVISETLLQ. The chain crosses the membrane as a helical span at residues 84–104; sequence VMWAISSAISVACFALSGIAA. At 105–135 the chain is on the cytoplasmic side; the sequence is QLLSALGLDGEQLTQGLKLSPSQVQTLLLWG. The chain crosses the membrane as a helical span at residues 136–156; that stretch reads AAALVIYWLLSLLLGLVLALL. The Lumenal segment spans residues 157-185; the sequence is GRILGGLKLVLFVAGFVALVRSVPDPSTR. The chain crosses the membrane as a helical span at residues 186-205; that stretch reads ALMLLALLTLFALLSRLTGS. Topologically, residues 206-243 are cytoplasmic; the sequence is RSSGSHLEAKVRGLERQIEELRGRQRRAAKMPRSMEEE.

In terms of assembly, homooligomer. Interacts with CRYAB; in the cellular response to DNA damage.

It localises to the nucleus outer membrane. The protein localises to the endoplasmic reticulum membrane. The protein resides in the sarcoplasmic reticulum membrane. It catalyses the reaction K(+)(in) = K(+)(out). The enzyme catalyses Ca(2+)(in) = Ca(2+)(out). Functionally, functions as a voltage-gated monoatomic cation channel permeable to both potassium and calcium. Plays a role in the cellular response to DNA damage. This chain is Voltage-gated monoatomic cation channel TMEM109, found in Mus musculus (Mouse).